Reading from the N-terminus, the 435-residue chain is Envelope glycoprotein M (435 aa).

Topologically, residues Met1–Arg36 are intravirion. Residues Ile37–Ile57 traverse the membrane as a helical segment. Topologically, residues Ala58–Thr111 are virion surface. A helical membrane pass occupies residues Tyr112–Ile132. At His133 to Thr155 the chain is on the intravirion side. A helical transmembrane segment spans residues Thr156 to Tyr176. The Virion surface segment spans residues Lys177–Gln178. A helical membrane pass occupies residues Ile179–Tyr199. Residues Phe200 to Ala233 lie on the Intravirion side of the membrane. Residues Val234 to Leu254 traverse the membrane as a helical segment. The Virion surface segment spans residues Glu255 to Gly265. A helical transmembrane segment spans residues Leu266–Ser288. The Intravirion portion of the chain corresponds to Glu289–His294. A helical transmembrane segment spans residues Tyr295 to Ala317. At His318–Arg334 the chain is on the virion surface side. Residues Leu335–Leu355 form a helical membrane-spanning segment. The Intravirion portion of the chain corresponds to Leu356–Glu435.

This sequence belongs to the herpesviridae glycoprotein M family. As to quaternary structure, interacts (via N-terminus) with gN (via N-terminus). The gM-gN heterodimer forms the gCII complex.

The protein localises to the virion membrane. The protein resides in the host Golgi apparatus. Its subcellular location is the host trans-Golgi network. It is found in the host endosome membrane. It localises to the host nucleus inner membrane. Envelope glycoprotein important for virion assembly and egress. Plays a role in the correct incorporation of gH-gL into virion membrane. Directs the glycoprotein N (gN) to the host trans-Golgi network. The chain is Envelope glycoprotein M from Homo sapiens (Human).